The primary structure comprises 224 residues: Octanoyltransferase (224 aa).

The region spanning Glu-29–Pro-224 is the BPL/LPL catalytic domain. Residues Arg-68–His-75, Ala-157–Gly-159, and Gly-170–Ala-172 each bind substrate. Cys-188 functions as the Acyl-thioester intermediate in the catalytic mechanism.

This sequence belongs to the LipB family.

The protein localises to the cytoplasm. It catalyses the reaction octanoyl-[ACP] + L-lysyl-[protein] = N(6)-octanoyl-L-lysyl-[protein] + holo-[ACP] + H(+). The protein operates within protein modification; protein lipoylation via endogenous pathway; protein N(6)-(lipoyl)lysine from octanoyl-[acyl-carrier-protein]: step 1/2. In terms of biological role, catalyzes the transfer of endogenously produced octanoic acid from octanoyl-acyl-carrier-protein onto the lipoyl domains of lipoate-dependent enzymes. Lipoyl-ACP can also act as a substrate although octanoyl-ACP is likely to be the physiological substrate. This is Octanoyltransferase from Polaromonas naphthalenivorans (strain CJ2).